The following is a 383-amino-acid chain: Chorismate synthase (383 aa).

R39 and R45 together coordinate NADP(+). Residues 128-130 (RAS), G291, 306-310 (KPIAT), and R332 each bind FMN.

The protein belongs to the chorismate synthase family. In terms of assembly, homotetramer. FMNH2 serves as cofactor.

The enzyme catalyses 5-O-(1-carboxyvinyl)-3-phosphoshikimate = chorismate + phosphate. It functions in the pathway metabolic intermediate biosynthesis; chorismate biosynthesis; chorismate from D-erythrose 4-phosphate and phosphoenolpyruvate: step 7/7. Functionally, catalyzes the anti-1,4-elimination of the C-3 phosphate and the C-6 proR hydrogen from 5-enolpyruvylshikimate-3-phosphate (EPSP) to yield chorismate, which is the branch point compound that serves as the starting substrate for the three terminal pathways of aromatic amino acid biosynthesis. This reaction introduces a second double bond into the aromatic ring system. This is Chorismate synthase from Thermus thermophilus (strain ATCC 27634 / DSM 579 / HB8).